The sequence spans 317 residues: Beta-ketoacyl-[acyl-carrier-protein] synthase III (317 aa).

Catalysis depends on residues cysteine 112 and histidine 244. The tract at residues 245–249 (QANIR) is ACP-binding. The active site involves asparagine 274.

Belongs to the thiolase-like superfamily. FabH family. Homodimer.

It localises to the cytoplasm. The catalysed reaction is malonyl-[ACP] + acetyl-CoA + H(+) = 3-oxobutanoyl-[ACP] + CO2 + CoA. It functions in the pathway lipid metabolism; fatty acid biosynthesis. In terms of biological role, catalyzes the condensation reaction of fatty acid synthesis by the addition to an acyl acceptor of two carbons from malonyl-ACP. Catalyzes the first condensation reaction which initiates fatty acid synthesis and may therefore play a role in governing the total rate of fatty acid production. Possesses both acetoacetyl-ACP synthase and acetyl transacylase activities. Its substrate specificity determines the biosynthesis of branched-chain and/or straight-chain of fatty acids. In Rickettsia massiliae (strain Mtu5), this protein is Beta-ketoacyl-[acyl-carrier-protein] synthase III.